We begin with the raw amino-acid sequence, 100 residues long: Integration host factor subunit alpha (100 aa).

This sequence belongs to the bacterial histone-like protein family. Heterodimer of an alpha and a beta chain.

In terms of biological role, this protein is one of the two subunits of integration host factor, a specific DNA-binding protein that functions in genetic recombination as well as in transcriptional and translational control. This chain is Integration host factor subunit alpha, found in Phenylobacterium zucineum (strain HLK1).